We begin with the raw amino-acid sequence, 156 residues long: ATP synthase subunit b (156 aa).

Residues 11–31 (AIAFVLFVMFCMKFVWPPIMA) traverse the membrane as a helical segment.

This sequence belongs to the ATPase B chain family. In terms of assembly, F-type ATPases have 2 components, F(1) - the catalytic core - and F(0) - the membrane proton channel. F(1) has five subunits: alpha(3), beta(3), gamma(1), delta(1), epsilon(1). F(0) has three main subunits: a(1), b(2) and c(10-14). The alpha and beta chains form an alternating ring which encloses part of the gamma chain. F(1) is attached to F(0) by a central stalk formed by the gamma and epsilon chains, while a peripheral stalk is formed by the delta and b chains.

It localises to the cell inner membrane. Functionally, f(1)F(0) ATP synthase produces ATP from ADP in the presence of a proton or sodium gradient. F-type ATPases consist of two structural domains, F(1) containing the extramembraneous catalytic core and F(0) containing the membrane proton channel, linked together by a central stalk and a peripheral stalk. During catalysis, ATP synthesis in the catalytic domain of F(1) is coupled via a rotary mechanism of the central stalk subunits to proton translocation. Component of the F(0) channel, it forms part of the peripheral stalk, linking F(1) to F(0). In Photorhabdus laumondii subsp. laumondii (strain DSM 15139 / CIP 105565 / TT01) (Photorhabdus luminescens subsp. laumondii), this protein is ATP synthase subunit b.